The primary structure comprises 483 residues: MTVQTFIPNGAKAASENTVTQPTHTTDVSIKKLYIETQGCQMNEYDSHRMADLLGDSHGYVLTNNPNEADILLMNTCSIREKAQEKVFSELGRWRKLKEQNPDLVIGVGGCVASQEGDNIQKRAPYVDMIFGPQTLHRLPQMLDQHHAQVEKPKKEKIKLVDISFPDIEKFDFLPEPRVEGFKAFVSIMEGCSKYCSFCVVPYTRGEEVSRPLDDVLAEIAGLAEKGVREISLLGQNVNGYRGETFEGGICTFPELLRLVAEIPGIGRLRYTTSHPLEFSDELIQCYEDLPQMVSHLHLPVQSGSNDVLKAMKRNHTIDVYIDKIAKLRKIRPDMHLSSDFIIGFPGETDENFAETLQFIKDLDFDHSYSFVYSKRPGTPASDLPDTTPEHVKKERLAQVQQVIKQSSIEKTDAMLGKIERVLIEKVSDQDPNILVGTADNTRLVTFVGDASWVGRFAEIEITEIKTLNLVYGELLNLEPDVA.

In terms of domain architecture, MTTase N-terminal spans 31-148 (KKLYIETQGC…LPQMLDQHHA (118 aa)). Cys-40, Cys-77, Cys-111, Cys-192, Cys-196, and Cys-199 together coordinate [4Fe-4S] cluster. A Radical SAM core domain is found at 178–410 (RVEGFKAFVS…QQVIKQSSIE (233 aa)). The TRAM domain occupies 413-477 (DAMLGKIERV…LNLVYGELLN (65 aa)).

The protein belongs to the methylthiotransferase family. MiaB subfamily. Monomer. Requires [4Fe-4S] cluster as cofactor.

The protein localises to the cytoplasm. The catalysed reaction is N(6)-dimethylallyladenosine(37) in tRNA + (sulfur carrier)-SH + AH2 + 2 S-adenosyl-L-methionine = 2-methylsulfanyl-N(6)-dimethylallyladenosine(37) in tRNA + (sulfur carrier)-H + 5'-deoxyadenosine + L-methionine + A + S-adenosyl-L-homocysteine + 2 H(+). Functionally, catalyzes the methylthiolation of N6-(dimethylallyl)adenosine (i(6)A), leading to the formation of 2-methylthio-N6-(dimethylallyl)adenosine (ms(2)i(6)A) at position 37 in tRNAs that read codons beginning with uridine. This chain is tRNA-2-methylthio-N(6)-dimethylallyladenosine synthase, found in Acinetobacter baumannii (strain AB0057).